A 1090-amino-acid chain; its full sequence is Protein transport protein Sec24A (1090 aa).

Disordered stretches follow at residues Met1–Thr260 and Thr272–Pro325. Residues Ala8–Ser28 are compositionally biased toward low complexity. Composition is skewed to polar residues over residues Pro29–Pro55, Trp138–His151, and Gly162–Phe184. Residues Gln194–Ser236 are compositionally biased toward pro residues. Composition is skewed to polar residues over residues Phe237 to His258, Gln274 to Val286, and Ser313 to Pro325. Zn(2+) contacts are provided by Cys428, Cys431, Cys449, and Cys452. Positions Cys428–Cys452 are zinc finger-like. Residues Pro963–Ile1036 form a Gelsolin-like repeat.

Belongs to the SEC23/SEC24 family. SEC24 subfamily. As to quaternary structure, COPII is composed of at least five proteins: the Sec23/24 complex, the Sec13/31 complex and Sar1. Interacts with TMED2. Interacts (as part of the Sec23/24 complex) with SEC22B; recruits SEC22B into COPII-coated vesicles for its transport from the endoplasmic reticulum to the Golgi. Interacts with STING1; promoting STING1 translocation to COPII vesicles in a STEEP1-dependent manner. Interacts with TMEM39A. Interacts with SACM1L; this interaction is reduced in the absence of TMEM39A. Interacts with kinase FAM20C; transport of FAM20C from the endoplasmic reticulum to the Golgi is likely to be mediated by COPII vesicles.

It localises to the cytoplasmic vesicle. It is found in the COPII-coated vesicle membrane. The protein resides in the endoplasmic reticulum membrane. Its subcellular location is the cytoplasm. The protein localises to the cytosol. Functionally, component of the coat protein complex II (COPII) which promotes the formation of transport vesicles from the endoplasmic reticulum (ER). The coat has two main functions, the physical deformation of the endoplasmic reticulum membrane into vesicles and the selection of cargo molecules for their transport to the Golgi complex. Plays a central role in cargo selection within the COPII complex and together with SEC24B may have a different specificity compared to SEC24C and SEC24D. May package preferentially cargos with cytoplasmic DxE or LxxLE motifs and may also recognize conformational epitopes. The protein is Protein transport protein Sec24A of Mus musculus (Mouse).